The chain runs to 300 residues: MEPPMEQSGGEQEPGAVRLLDLPWEDVLLPHVLNWVPLRQLLRLQRVSRAFRALVQLHLARLRRFDAAQVGPQIPRAALARLLRDAEGLQELALAPCHEWLSDEDLVPVLARNPQLRSVALAGCGQLSRRALGALAEGCPRLQRLSLAHCDWVDGLALRGLADRCPALEELDLTACRQLKDEAIVYLAQRRGAGLRSLSLAVNANVGDTAVQELARNCPQLEHLDLTGCLRVGSDGVRTLAEYCPALRSLRVRHCHHVAEPSLSRLRKRGVDIDVEPPLHQALVLLQDMAGFAPFVNLQV.

N-acetylmethionine is present on methionine 1. The F-box domain occupies 19–66 (LLDLPWEDVLLPHVLNWVPLRQLLRLQRVSRAFRALVQLHLARLRRFD). Residues 113–269 (NPQLRSVALA…EPSLSRLRKR (157 aa)) are interaction with SMURF1. LRR repeat units lie at residues 141–162 (RLQRLSLAHCDWVDGLALRGLA), 167–188 (ALEELDLTACRQLKDEAIVYLA), 194–215 (GLRSLSLAVNANVGDTAVQELA), 220–241 (QLEHLDLTGCLRVGSDGVRTLA), and 246–267 (ALRSLRVRHCHHVAEPSLSRLR).

This sequence belongs to the FBXL15 family. In terms of assembly, part of the SCF (SKP1-CUL1-F-box) E3 ubiquitin-protein ligase complex SCF(FBXL15) composed of CUL1, SKP1, RBX1 and FBXL15. Expressed in heart, liver, spleen, bone, muscle, brain and kidney (at protein level).

The protein resides in the cytoplasm. It participates in protein modification; protein ubiquitination. Its function is as follows. Substrate recognition component of a SCF (SKP1-CUL1-F-box protein) E3 ubiquitin-protein ligase complex which mediates the ubiquitination and subsequent proteasomal degradation of SMURF1, thereby acting as a positive regulator of the BMP signaling pathway. Required for dorsal/ventral pattern formation and bone mass maintenance. Also mediates ubiquitination of SMURF2 and WWP2. The protein is F-box/LRR-repeat protein 15 (Fbxl15) of Mus musculus (Mouse).